Here is a 552-residue protein sequence, read N- to C-terminus: Mothers against decapentaplegic homolog 4 (552 aa).

Positions 1 to 322 (MDNMSITNTP…PISNHPAPEY (322 aa)) are mediates interaction with ZBTB7A. The MH1 domain maps to 18–142 (SIVHSLMCHR…YERVVSPGID (125 aa)). Position 37 is an N6-acetyllysine (Lys37). Residues 44-69 (VKKLKEKKDELDSLITAITTNGAHPS) form a required for interaction with TSC22D1 region. Cys71 serves as a coordination point for Zn(2+). Residue Lys113 forms a Glycyl lysine isopeptide (Lys-Gly) (interchain with G-Cter in SUMO2) linkage. Zn(2+) contacts are provided by Cys115, Cys127, and His132. 2 disordered regions span residues 168–194 (GQPS…STET) and 236–256 (GLLQ…FTGQ). 2 stretches are compositionally biased toward polar residues: residues 170 to 194 (PSLS…STET) and 245 to 256 (QPGQQQNGFTGQ). The segment at 275-320 (PYTPNLPHHQNGHLQHHPPMPPHPGHYWPVHNELAFQPPISNHPAP) is SAD. The MH2 domain maps to 323–552 (WCSIAYFEMD…MPIADPQPLD (230 aa)). Residues Lys428 and Lys507 each carry the N6-acetyllysine modification. Lys519 is covalently cross-linked (Glycyl lysine isopeptide (Lys-Gly) (interchain with G-Cter in ubiquitin)).

Belongs to the dwarfin/SMAD family. As to quaternary structure, monomer; in the absence of TGF-beta activation. Heterotrimer; on TGF-beta activation. Heterotrimer composed of two molecules of a C-terminally phosphorylated R-SMAD molecule, SMAD2 or SMAD3, and one molecule of SMAD4 to form the transcriptional active SMAD2/SMAD3-SMAD4 complex. Found in a ternary complex composed of SMAD4, STK11/LKB1 and STK11IP. Found in a complex with SMAD1 and YY1. Identified in a complex that contains at least ZNF451, SMAD2, SMAD3 and SMAD4. Interacts with ATF2, COPS5, DACH1, MSG1, SKI, STK11/LKB1, STK11IP and TRIM33. Associates with ZNF423 or ZNF521 in response to BMP2 leading to activate transcription of BMP target genes. Interacts with USP9X. Interacts (via the MH1 and MH2 domains) with RBPMS. Interacts with WWTR1 (via coiled-coil domain). Interacts with CITED1 and CITED2. Interacts with PDPK1 (via PH domain). Interacts with VPS39; this interaction affects heterodimer formation with SMAD3, but not with SMAD2, and leads to inhibition of SMAD3-dependent transcription activation. Interactions with VPS39 and SMAD2 may be mutually exclusive. Interacts (via MH2 domain) with ZNF451 (via N-terminal zinc-finger domains). Interacts with ZC3H3. Interacts weakly with ZNF8. Interacts with NUP93 and IPO7; translocates SMAD4 to the nucleus through the NPC upon BMP7 stimulation resulting in activation of SMAD4 signaling. Interacts with CREB3L1, the interaction takes place upon TGFB1 induction and SMAD4 acts as a CREB3L1 coactivator to induce the expression of genes involved in the assembly of collagen extracellular matrix. Interacts with DLX1. Interacts with ZBTB7A; the interaction is direct and stimulated by TGFB1. Interacts with CREBBP; the recruitment of this transcriptional coactivator is negatively regulated by ZBTB7A. Interacts with EP300; the interaction with this transcriptional coactivator is negatively regulated by ZBTB7A. Interacts with HDAC1. Interacts (via MH2 domain) with ZMIZ1 (via SP-RING-type domain); in the TGF-beta signaling pathway increases the activity of the SMAD3/SMAD4 transcriptional complex. Interacts (via N-terminus) with TSC22D1. In terms of processing, phosphorylated by PDPK1. Post-translationally, monoubiquitinated on Lys-519 by E3 ubiquitin-protein ligase TRIM33. Monoubiquitination hampers its ability to form a stable complex with activated SMAD2/3 resulting in inhibition of TGF-beta/BMP signaling cascade. Deubiquitination by USP9X restores its competence to mediate TGF-beta signaling.

Its subcellular location is the cytoplasm. It localises to the nucleus. Functionally, in muscle physiology, plays a central role in the balance between atrophy and hypertrophy. When recruited by MSTN, promotes atrophy response via phosphorylated SMAD2/4. MSTN decrease causes SMAD4 release and subsequent recruitment by the BMP pathway to promote hypertrophy via phosphorylated SMAD1/5/8. Acts synergistically with SMAD1 and YY1 in bone morphogenetic protein (BMP)-mediated cardiac-specific gene expression. Binds to SMAD binding elements (SBEs) (5'-GTCT/AGAC-3') within BMP response element (BMPRE) of cardiac activating regions. Common SMAD (co-SMAD) is the coactivator and mediator of signal transduction by TGF-beta (transforming growth factor). Component of the heterotrimeric SMAD2/SMAD3-SMAD4 complex that forms in the nucleus and is required for the TGF-mediated signaling. Promotes binding of the SMAD2/SMAD4/FAST-1 complex to DNA and provides an activation function required for SMAD1 or SMAD2 to stimulate transcription. Component of the multimeric SMAD3/SMAD4/JUN/FOS complex which forms at the AP1 promoter site; required for synergistic transcriptional activity in response to TGF-beta. May act as a tumor suppressor. Positively regulates PDPK1 kinase activity by stimulating its dissociation from the 14-3-3 protein YWHAQ which acts as a negative regulator. The sequence is that of Mothers against decapentaplegic homolog 4 (SMAD4) from Homo sapiens (Human).